The following is a 431-amino-acid chain: Urokinase-type plasminogen activator (431 aa).

The signal sequence occupies residues 1–20 (MRALLARLLLCVLVVSDSKG). The region spanning 27-63 (VPSNCDCLNGGTCVSNKYFSNIHWCNCPKKFGGQHCE) is the EGF-like domain. Intrachain disulfides connect Cys-31–Cys-39, Cys-33–Cys-51, Cys-53–Cys-62, Cys-70–Cys-151, Cys-91–Cys-133, and Cys-122–Cys-146. Positions 34 to 57 (LNGGTCVSNKYFSNIHWCNCPKKF) are binds urokinase plasminogen activator surface receptor. The Kringle domain maps to 69-151 (TCYEGNGHFY…LVQECMVHDC (83 aa)). The connecting peptide stretch occupies residues 152 to 178 (ADGKKPSSPPEELKFQCGQKTLRPRFK). Position 158 is a phosphoserine (Ser-158). Disulfide bonds link Cys-168–Cys-299, Cys-209–Cys-225, Cys-217–Cys-288, Cys-313–Cys-382, Cys-345–Cys-361, and Cys-372–Cys-400. Positions 179-424 (IVGGEFTTIE…FLPWIRSHTK (246 aa)) constitute a Peptidase S1 domain. Catalysis depends on charge relay system residues His-224 and Asp-275. Residue Asn-322 is glycosylated (N-linked (GlcNAc...) asparagine). Ser-323 is subject to Phosphoserine. Residue Ser-376 is the Charge relay system of the active site.

This sequence belongs to the peptidase S1 family. In terms of assembly, found in high and low molecular mass forms. Each consists of two chains, A and B. The high molecular mass form contains a long chain A which is cleaved to yield a short chain A. Forms heterodimer with SERPINA5. Binds LRP1B; binding is followed by internalization and degradation. Interacts with MRC2. Interacts with PLAUR. In complex with SERPINE1, interacts with PLAUR/uPAR. Interacts with SORL1 and LRP1, either alone or in complex with SERPINE1; these interactions are abolished in the presence of LRPAP1/RAP. The ternary complex composed of PLAUR-PLAU-PAI1 also interacts with SORLA. Post-translationally, phosphorylation of Ser-158 and Ser-323 abolishes proadhesive ability but does not interfere with receptor binding. In terms of processing, produced as an inactive single-chain protein (pro-uPA or sc-uPA), is processed into the active disulfide-linked two-chain form of PLAU/uPA by a proteolytic event mediated, at least, by TMPRSS4.

The protein localises to the secreted. It carries out the reaction Specific cleavage of Arg-|-Val bond in plasminogen to form plasmin.. Its activity is regulated as follows. Inhibited by SERPINA5. Inhibited by SERPINE1. Functionally, specifically cleaves the zymogen plasminogen to form the active enzyme plasmin. In Pongo abelii (Sumatran orangutan), this protein is Urokinase-type plasminogen activator (PLAU).